Reading from the N-terminus, the 531-residue chain is MFFQGEGSIDIPVQDIISWIFDQARYEIEKPVYMDASDTSRSISWRQARTLVRQLAAGLRAAGLKDGDCVCLHSFNDIYYSILVLGIIAAGGIYMGTNPGYTSHELNYHLRVAQAKFVISDPEMLDRMIPAAEGNGIPKDRIWAFTTRESQVVATTGLAHWTALLKHGEADWHRLDDPNHAKTTVVARLFSSGTTGLPKPVDFTHYNIIAQHTLVYDAHPVPFETSRILSLPFFHAAAAPSAHFSTLRLGDPSYVLRRFEPDLFLTTVAKHNITECTAVPPIILTILSHCTTPKYSHSLQSLKIVRCGAAPLDKTTQARFQSLLAPDATFTQVWGMTESSCIATMIPYPESDDTGSVGRLLPGMEAKIINTDGDDITAPDTTGEVCLRGPTIVRGYFNLPSANESAFDKDGFYRTGDLGYCDGKTRKWYLLDRKKDIIKVRGFQVAPAEVEGVLRNHPRIQDVAVVGVYDAEAKTEYPRAYVVRQDQSLREEEVKEFVALRLAKYKRLDGGVRFIDAIPRNASGKILKRLL.

Residue 188–199 (RLFSSGTTGLPK) coordinates AMP. An AMP-binding region spans residues 449-525 (EVEGVLRNHP…DAIPRNASGK (77 aa)).

The protein belongs to the ATP-dependent AMP-binding enzyme family.

The protein operates within secondary metabolite biosynthesis. Its function is as follows. Acyl-CoA ligase; part of the gene cluster that mediates the biosynthesis of azaphilones, a class of fungal metabolites characterized by a highly oxygenated pyrano-quinone bicyclic core and exhibiting a broad range of bioactivities. In the first step, the non-reducing polyketide synthase azaA forms the hexaketide precursor from successive condensations of five malonyl-CoA units, presumably with a simple acetyl-CoA starter unit. The reactive polyketide chain then undergoes a PT-mediated C2-C7 cyclization to afford the aromatic ring and is eventually released as an aldehyde through the R-domain. The putative ketoreductase azaE is proposed to catalyze the reduction of the terminal ketone resulting in the early culture product FK17-P2a. The monooxygenase azaH was demonstrated to be the only enzyme required to convert FK17-P2a to azanigerone E. AzaH first hydroxylates the benzaldehyde intermediate FK17-P2a at C4, which triggers the formation of the pyran-ring to afford azanigerone E. In parallel, the 2,4-dimethylhexanoyl chain is synthesized by the HR-PKS azaB and is proposed to be transferred to the C4-hydroxyl of azanigerone E by the acyltransferase azaD directly from the ACP domain of azaB. Alternatively, the 2,4-dimethyl-hexanoyl chain may be offloaded from the HR-PKS as a carboxylic acid and converted to an acyl-CoA by azaF. The resulting acyl-CoA molecule could then be taken up as a substrate by AzaD to form azanigerone B. To yield the carboxylic acid substituent in azanigerone A, the hydroxypropyl side chain of azanigerone B would need to undergo a C-C oxidative cleavage catalyzed by cytochrome P450 AzaI. AzaI is proposed to act on a vicinal diol that leads to a C-C bond scission either through an alkoxyradical intermediate or a peroxy complex. In the biosynthesis of azanigerone A, azanigerone B first undergoes hydroxylation at C10, possibly catalyzed by one of the two FAD-dependent monooxygenases encoded in the cluster, azaG or azaL, resulting in the vicinal diol azanigerone C. Oxidative cleavage of azanigerone C by azaI would yield the corresponding aldehyde derivative of azanigerone A. Finally, the dehydrogenase azaJ is proposed to convert the aldehyde functional group into the carboxylic acid, completing the conversion from azanigerone B to azanigerone A. Alternatively, the oxidation of aldehyde to carboxylic acid may be catalyzed by the same P450 enzyme azaI via consecutive oxidation or by endogenous alcohol dehydrogenase. The polypeptide is Acyl-CoA ligase azaF (Aspergillus niger (strain ATCC 1015 / CBS 113.46 / FGSC A1144 / LSHB Ac4 / NCTC 3858a / NRRL 328 / USDA 3528.7)).